We begin with the raw amino-acid sequence, 292 residues long: Ribosomal RNA small subunit methyltransferase A (292 aa).

Asn-28, Leu-30, Gly-55, Glu-76, Asp-101, and Asn-126 together coordinate S-adenosyl-L-methionine.

It belongs to the class I-like SAM-binding methyltransferase superfamily. rRNA adenine N(6)-methyltransferase family. RsmA subfamily.

It localises to the cytoplasm. It carries out the reaction adenosine(1518)/adenosine(1519) in 16S rRNA + 4 S-adenosyl-L-methionine = N(6)-dimethyladenosine(1518)/N(6)-dimethyladenosine(1519) in 16S rRNA + 4 S-adenosyl-L-homocysteine + 4 H(+). Specifically dimethylates two adjacent adenosines (A1518 and A1519) in the loop of a conserved hairpin near the 3'-end of 16S rRNA in the 30S particle. May play a critical role in biogenesis of 30S subunits. The protein is Ribosomal RNA small subunit methyltransferase A of Bacillus cereus (strain G9842).